The following is a 599-amino-acid chain: Protein linkin (599 aa).

The N-terminal stretch at 1-19 (MKKILPIIWLINLVSGSLS) is a signal peptide. At 20 to 553 (LEKKAPDLLG…SRLYVTPSAL (534 aa)) the chain is on the extracellular side. Asparagine 50, asparagine 117, asparagine 163, asparagine 361, and asparagine 378 each carry an N-linked (GlcNAc...) asparagine glycan. The chain crosses the membrane as a helical span at residues 554-574 (IVQSLAVIALVCCMLLMVVVF). Over 575 to 599 (LHYREKKEDRYERQQQSHRFHFDAM) the chain is Cytoplasmic.

Belongs to the TIP family. In terms of tissue distribution, expressed in all somatic gonadal cells including distal tip cells, anchor cell, uterine precursor cells and spermatheca precursor cells of the hermaphrodite. Also expressed in the pharynx, pharyngeal-intestinal valve, intestine, excretory cell and canal, seam cells, a subset of hypodermal cells, vulval precursor cells of the hermaphrodite and hook precursor cells in the male.

It localises to the apical cell membrane. Its subcellular location is the lateral cell membrane. In terms of biological role, probable cell adhesion protein involved in gonadal cell migration. The protein is Protein linkin of Caenorhabditis elegans.